The sequence spans 339 residues: Homocysteine S-methyltransferase 2 (339 aa).

Residues 12–326 enclose the Hcy-binding domain; it reads AVRRWVDAAG…NTIRAIHRTL (315 aa). 3 residues coordinate Zn(2+): cysteine 244, cysteine 311, and cysteine 312.

In terms of assembly, monomer. Zn(2+) serves as cofactor.

The catalysed reaction is S-methyl-L-methionine + L-homocysteine = 2 L-methionine + H(+). In terms of biological role, catalyzes methyl transfer from S-methylmethionine (SMM) to adenosyl-L-homocysteine (AdoMet). SMM degradation (by HMT-1, HMT-2, HMT-3 and HMT-4) and biosynthesis (by MMT1) constitute the SMM cycle in plants, which is probably required to achieve short term control of AdoMet level. The polypeptide is Homocysteine S-methyltransferase 2 (HMT-2) (Zea mays (Maize)).